Here is a 502-residue protein sequence, read N- to C-terminus: Lysine--tRNA ligase (502 aa).

Residues E399 and E406 each coordinate Mg(2+).

It belongs to the class-II aminoacyl-tRNA synthetase family. In terms of assembly, homodimer. Mg(2+) serves as cofactor.

The protein localises to the cytoplasm. The enzyme catalyses tRNA(Lys) + L-lysine + ATP = L-lysyl-tRNA(Lys) + AMP + diphosphate. The polypeptide is Lysine--tRNA ligase (Synechococcus sp. (strain RCC307)).